The chain runs to 469 residues: Dynein axonemal assembly factor 11 (469 aa).

LRR repeat units follow at residues 20-43 (IFSL…DKWC), 44-65 (RELK…VSKL), 66-89 (KKLE…GCES), and 90-110 (LQKL…NSLQ). One can recognise an LRRCT domain in the interval 114 to 135 (HLRELYLVGNPCAEYEGYRQYV). Composition is skewed to basic and acidic residues over residues 179–213 (KRAA…RRWY) and 261–286 (SRLE…ELKK). 2 disordered regions span residues 179 to 290 (KRAA…KPPR) and 436 to 469 (KTQA…PPLM).

Belongs to the tilB family.

It is found in the cytoplasm. The protein resides in the cell projection. It localises to the cilium. Its subcellular location is the dynein axonemal particle. The protein localises to the flagellum. Its function is as follows. Involved in dynein arm assembly, is important for expression and transporting outer dynein arm (ODA) proteins from the cytoplasm to the cilia. This chain is Dynein axonemal assembly factor 11 (dnaaf11), found in Xenopus laevis (African clawed frog).